The chain runs to 300 residues: Ribosomal protein bS6--L-glutamate ligase (300 aa).

The ATP-grasp domain maps to 104–287 (MQLLARQGID…IAGKMIRWIE (184 aa)). ATP is bound by residues lysine 141, 178 to 179 (EY), aspartate 187, and 211 to 213 (RSN). Mg(2+) is bound by residues aspartate 248, glutamate 260, and asparagine 262. 3 residues coordinate Mn(2+): aspartate 248, glutamate 260, and asparagine 262.

The protein belongs to the RimK family. The cofactor is Mg(2+). Requires Mn(2+) as cofactor.

In terms of biological role, an L-glutamate ligase that catalyzes the ATP-dependent post-translational addition of glutamate residues to the C-terminus of ribosomal protein bS6 (RpsF). Is also able to catalyze the synthesis of poly-alpha-glutamate in vitro, via ATP hydrolysis from unprotected glutamate as substrate. The number of glutamate residues added to either RpsF or to poly-alpha-glutamate changes with pH. The polypeptide is Ribosomal protein bS6--L-glutamate ligase (Shigella boydii serotype 4 (strain Sb227)).